A 625-amino-acid chain; its full sequence is Very-long-chain aldehyde decarbonylase CER1 (625 aa).

A run of 5 helical transmembrane segments spans residues 45 to 65, 126 to 146, 177 to 197, 200 to 220, and 329 to 349; these read LGYF…QVWI, GVLM…YWLH, PFAE…TTLL, TASI…NNMG, and LLWP…RLFV. The Fatty acid hydroxylase domain maps to 138–272; it reads VEFLYYWLHK…MPLYDYIYGT (135 aa).

The protein belongs to the sterol desaturase family. In terms of assembly, homodimer. Interacts with CER3, CYTB5-B, CYTB5-C, CYTB5-D and CYTB5-E. As to expression, expressed in seedlings, stems, leaves, flowers, fruits and siliques. Not detected in roots, pollen and seeds. Expressed in trichomes, cotyledons, shoot apical meristem and leaf primordia. Preferentially associated with young leaves rather than mature leaves. Expressed in the epidermis of the stem and caulines leaves, in the carpels and the sepals.

It is found in the endoplasmic reticulum membrane. It catalyses the reaction a long-chain fatty aldehyde + 2 NADPH + O2 + H(+) = a long-chain alkane + formate + 2 NADP(+) + H2O. Its function is as follows. Aldehyde decarbonylase involved in the conversion of aldehydes to alkanes. Core component of a very-long-chain alkane synthesis complex. Involved in epicuticular wax biosynthesis and pollen fertility. The protein is Very-long-chain aldehyde decarbonylase CER1 (CER1) of Arabidopsis thaliana (Mouse-ear cress).